The following is a 372-amino-acid chain: tRNA-specific 2-thiouridylase MnmA (372 aa).

Residues 16–23 (GMSGGVDS) and M42 contribute to the ATP site. The interval 102-104 (NPD) is interaction with target base in tRNA. C107 serves as the catalytic Nucleophile. A disulfide bridge connects residues C107 and C205. ATP is bound at residue G132. The interval 155–157 (KDQ) is interaction with tRNA. Catalysis depends on C205, which acts as the Cysteine persulfide intermediate. Residues 317 to 318 (RY) form an interaction with tRNA region.

The protein belongs to the MnmA/TRMU family.

It localises to the cytoplasm. It catalyses the reaction S-sulfanyl-L-cysteinyl-[protein] + uridine(34) in tRNA + AH2 + ATP = 2-thiouridine(34) in tRNA + L-cysteinyl-[protein] + A + AMP + diphosphate + H(+). Catalyzes the 2-thiolation of uridine at the wobble position (U34) of tRNA, leading to the formation of s(2)U34. The chain is tRNA-specific 2-thiouridylase MnmA from Shewanella denitrificans (strain OS217 / ATCC BAA-1090 / DSM 15013).